The primary structure comprises 951 residues: Valine--tRNA ligase (951 aa).

Residues 40 to 50 (PNVTGSLHMGH) carry the 'HIGH' region motif. A 'KMSKS' region motif is present at residues 551-555 (KMSKS). Position 554 (lysine 554) interacts with ATP. Positions 879–950 (MAGLIDVEAE…LLEQKAKIES (72 aa)) form a coiled coil.

This sequence belongs to the class-I aminoacyl-tRNA synthetase family. ValS type 1 subfamily. As to quaternary structure, monomer.

The protein localises to the cytoplasm. The catalysed reaction is tRNA(Val) + L-valine + ATP = L-valyl-tRNA(Val) + AMP + diphosphate. Its function is as follows. Catalyzes the attachment of valine to tRNA(Val). As ValRS can inadvertently accommodate and process structurally similar amino acids such as threonine, to avoid such errors, it has a 'posttransfer' editing activity that hydrolyzes mischarged Thr-tRNA(Val) in a tRNA-dependent manner. This is Valine--tRNA ligase from Pseudoalteromonas translucida (strain TAC 125).